The following is a 176-amino-acid chain: Large ribosomal subunit protein uL10 (176 aa).

This sequence belongs to the universal ribosomal protein uL10 family. In terms of assembly, part of the ribosomal stalk of the 50S ribosomal subunit. The N-terminus interacts with L11 and the large rRNA to form the base of the stalk. The C-terminus forms an elongated spine to which L12 dimers bind in a sequential fashion forming a multimeric L10(L12)X complex.

Functionally, forms part of the ribosomal stalk, playing a central role in the interaction of the ribosome with GTP-bound translation factors. The polypeptide is Large ribosomal subunit protein uL10 (Marinobacter nauticus (strain ATCC 700491 / DSM 11845 / VT8) (Marinobacter aquaeolei)).